Reading from the N-terminus, the 256-residue chain is Calsenilin (256 aa).

The segment at 1–22 (MQRTKEAMKASDGSLLGDPGRI) is disordered. Ser14 is modified (phosphoserine). Lys26 participates in a covalent cross-link: Glycyl lysine isopeptide (Lys-Gly) (interchain with G-Cter in SUMO1). Residues Cys45 and Cys46 are each lipidated (S-palmitoyl cysteine). Phosphoserine occurs at positions 60 and 63. Residues 67–123 (LELSTVRHQPEGLDQLQAQTKFTKKELQSLYRGFKNECPTGLVDEDTFKLIYSQFFP) form the EF-hand 1; degenerate domain. Residue Lys90 forms a Glycyl lysine isopeptide (Lys-Gly) (interchain with G-Cter in SUMO1) linkage. EF-hand domains follow at residues 126–161 (DATT…LLRG), 162–197 (TVHE…IYDM), and 210–245 (APLE…DENI). Residues Asp175, Asn177, Asp179, Tyr181, Glu186, Asp223, Asn225, Asp227, and Glu234 each coordinate Ca(2+). Residues 243-256 (ENIMSSMQLFENVI) form an interaction with KCND2 region.

Belongs to the recoverin family. As to quaternary structure, binds to DNA as a homomultimer. Dimerization is induced by binding to calcium. Interacts with the C-terminus of PSEN1 and PSEN2 and with PSEN2 CTF subunit. Associates with KCN1. Component of heteromultimeric potassium channels. Identified in potassium channel complexes containing KCND1, KCND2, KCND3, KCNIP1, KCNIP2, KCNIP3, KCNIP4, DPP6 and DPP10. Interacts with KCND2 and KCND3. Post-translationally, palmitoylated. Palmitoylation enhances association with the plasma membrane. In terms of processing, proteolytically cleaved by caspase-3. Detected in brain cortex, thalamus, dentate gyrus and cerebellum (at protein level). Expressed in brain. Colocalizes with KCND2 in excitatory neurons including cortical and hippocampal CA1 pyramidal cells.

It is found in the cytoplasm. Its subcellular location is the cell membrane. The protein resides in the endoplasmic reticulum. The protein localises to the golgi apparatus. It localises to the nucleus. In terms of biological role, calcium-dependent transcriptional repressor that binds to the DRE element of genes including PDYN and FOS. Affinity for DNA is reduced upon binding to calcium and enhanced by binding to magnesium. Seems to be involved in nociception. Regulatory subunit of Kv4/D (Shal)-type voltage-gated rapidly inactivating A-type potassium channels, such as KCND2/Kv4.2 and KCND3/Kv4.3. Modulates channel expression at the cell membrane, gating characteristics, inactivation kinetics and rate of recovery from inactivation in a calcium-dependent and isoform-specific manner. Functionally, may play a role in the regulation of PSEN2 proteolytic processing and apoptosis. Together with PSEN2 involved in modulation of amyloid-beta formation. This Rattus norvegicus (Rat) protein is Calsenilin (Kcnip3).